The following is a 167-amino-acid chain: Photosystem I assembly protein Ycf3 (167 aa).

TPR repeat units follow at residues 35 to 68 (AFAY…EVDA), 72 to 105 (SYIL…NPSL), and 120 to 153 (GEQA…APTN).

Belongs to the Ycf3 family.

It localises to the plastid. The protein localises to the chloroplast thylakoid membrane. Its function is as follows. Essential for the assembly of the photosystem I (PSI) complex. May act as a chaperone-like factor to guide the assembly of the PSI subunits. The chain is Photosystem I assembly protein Ycf3 from Stigeoclonium helveticum (Green alga).